Reading from the N-terminus, the 97-residue chain is MTKITSDDVRKVATLARLNLPEDLIDTYTSQLEKILGYVAQLEEVDTEDIPPTSRAVEVTNVLREDIIQETDIREDLINLAPNREGDFFRVPKILSE.

It belongs to the GatC family. Heterotrimer of A, B and C subunits.

It carries out the reaction L-glutamyl-tRNA(Gln) + L-glutamine + ATP + H2O = L-glutaminyl-tRNA(Gln) + L-glutamate + ADP + phosphate + H(+). It catalyses the reaction L-aspartyl-tRNA(Asn) + L-glutamine + ATP + H2O = L-asparaginyl-tRNA(Asn) + L-glutamate + ADP + phosphate + 2 H(+). Functionally, allows the formation of correctly charged Asn-tRNA(Asn) or Gln-tRNA(Gln) through the transamidation of misacylated Asp-tRNA(Asn) or Glu-tRNA(Gln) in organisms which lack either or both of asparaginyl-tRNA or glutaminyl-tRNA synthetases. The reaction takes place in the presence of glutamine and ATP through an activated phospho-Asp-tRNA(Asn) or phospho-Glu-tRNA(Gln). This is Aspartyl/glutamyl-tRNA(Asn/Gln) amidotransferase subunit C from Prochlorococcus marinus (strain MIT 9211).